The primary structure comprises 1042 residues: MTEDSRTILLIGSGPIQIGQAAEFDYSGAQACRALQEEGARVVLVNSNPATIMTDPEMADAVYIEPIEPDAIAEVIEQEDPDGVIAGLGGQTGLNVTAALAEQGVLDEHDVDVMGTPLDTIYATEDRDLFRQRMADLGQPVPASTTIALGDDETATDIDEGALRERVDDAVEAVGGLPVIARTTYTLGGSGSGVVHDFEALVDRVRTGLRLSRNAEVLVTESITGWVELEYEVMRDAGDSCIIVCNMENIDPMGIHTGESTVVTPSQIIPDDGHQEMRNAAVAVIRELGIQGGCNIQFAWRDDGTPGGEYRVVEVNPRVSRSSALASKATGYPIARVTAKVALGKRLHEIDNEITGQTTAAFEPAIDYVVTKVPRWPNDKFPEVDFELSTAMKSTGEAMAIGRTFEESLLKALRSSEYDPSVDWATVSDDELAADYLQRPSPDRPYAVFEAFERGFTVGDVNDHTGFREWYLQRFQNVAAASAAASEGDVATPAALGYTNSAVAALASDGGDVAVDDVAATAPERTFKQVDTCAGEFAASTPYYYSARSQGSTGSDVRADRDAHSVVIVGGGPIRIGQGVEFDYCTVHAVRALREAGIDAHVVNNNPETVSTDYDTSDGLFFEPITAEEVADVVEATNADGVMVQFGGQTSVDVGAPLEAELERRGLDCEIMGTDVDAMDLAEDRDRFNRLLDERDISQPDGGSATSVAGALELAAEVGYPVLVRPSYVLGGRAMEIVHDDDELRRYVEEAVRVSPEKPVLVDEFLADAVELDVDAVSDGEDVLVGGVMEHIESAGVHSGDSACVIPPRGLGDDILARVREVTTEIARALDTVGLLNVQLAVQDGEVYVLEANPRSSRTVPFVSKATGVPIAKLAAKVMAGESLADLDASEGVPEQYSVKEVVLPFDRLPGSDPRLGPEMKSTGEVMGTASDPGMAYWKAQVAASNAPVPGSTAVVDLLVEGLGERFEVVTVKDVPAAIRRGEVEFLVSDDRDALTAAVEAEIPYVSTVAAAEAMREGIAAADGAREAMPVADRPVNDETWG.

The segment at 1–417 is carboxyphosphate synthetic domain; that stretch reads MTEDSRTILL…SLLKALRSSE (417 aa). Residues Arg127, Arg182, Gly188, Gly189, Glu221, Ile223, Glu228, Gly254, Ile255, His256, Gln297, and Glu314 each coordinate ATP. An ATP-grasp 1 domain is found at 131–343; sequence RQRMADLGQP…IARVTAKVAL (213 aa). The Mg(2+) site is built by Gln297, Glu314, and Asn316. 3 residues coordinate Mn(2+): Gln297, Glu314, and Asn316. Positions 418–558 are oligomerization domain; that stretch reads YDPSVDWATV…SQGSTGSDVR (141 aa). The segment at 559-947 is carbamoyl phosphate synthetic domain; sequence ADRDAHSVVI…WKAQVAASNA (389 aa). Residues 689–880 form the ATP-grasp 2 domain; the sequence is NRLLDERDIS…IAKLAAKVMA (192 aa). Residues Arg725, Glu764, Leu766, Glu771, Gly796, Val797, His798, Ser799, Gln839, and Glu851 each contribute to the ATP site. Residues Gln839, Glu851, and Asn853 each coordinate Mg(2+). Mn(2+)-binding residues include Gln839, Glu851, and Asn853. One can recognise an MGS-like domain in the interval 947 to 1042; it reads APVPGSTAVV…DRPVNDETWG (96 aa). An allosteric domain region spans residues 948 to 1042; it reads PVPGSTAVVD…DRPVNDETWG (95 aa).

This sequence belongs to the CarB family. As to quaternary structure, composed of two chains; the small (or glutamine) chain promotes the hydrolysis of glutamine to ammonia, which is used by the large (or ammonia) chain to synthesize carbamoyl phosphate. Tetramer of heterodimers (alpha,beta)4. Requires Mg(2+) as cofactor. It depends on Mn(2+) as a cofactor.

The catalysed reaction is hydrogencarbonate + L-glutamine + 2 ATP + H2O = carbamoyl phosphate + L-glutamate + 2 ADP + phosphate + 2 H(+). It catalyses the reaction hydrogencarbonate + NH4(+) + 2 ATP = carbamoyl phosphate + 2 ADP + phosphate + 2 H(+). The protein operates within amino-acid biosynthesis; L-arginine biosynthesis; carbamoyl phosphate from bicarbonate: step 1/1. It participates in pyrimidine metabolism; UMP biosynthesis via de novo pathway; (S)-dihydroorotate from bicarbonate: step 1/3. Functionally, large subunit of the glutamine-dependent carbamoyl phosphate synthetase (CPSase). CPSase catalyzes the formation of carbamoyl phosphate from the ammonia moiety of glutamine, carbonate, and phosphate donated by ATP, constituting the first step of 2 biosynthetic pathways, one leading to arginine and/or urea and the other to pyrimidine nucleotides. The large subunit (synthetase) binds the substrates ammonia (free or transferred from glutamine from the small subunit), hydrogencarbonate and ATP and carries out an ATP-coupled ligase reaction, activating hydrogencarbonate by forming carboxy phosphate which reacts with ammonia to form carbamoyl phosphate. This Halobacterium salinarum (strain ATCC 700922 / JCM 11081 / NRC-1) (Halobacterium halobium) protein is Carbamoyl phosphate synthase large chain.